Reading from the N-terminus, the 247-residue chain is 2-amino-5-formylamino-6-ribosylaminopyrimidin-4(3H)-one 5'-monophosphate deformylase (247 aa).

Residues Glu41, His43, Asp52, and His121 each contribute to the Fe cation site.

The protein belongs to the creatininase superfamily. FAPy deformylase family. As to quaternary structure, homodimer. It depends on Fe(2+) as a cofactor. The cofactor is Zn(2+).

It catalyses the reaction 2-amino-5-formylamino-6-(5-phospho-D-ribosylamino)pyrimidin-4(3H)-one + H2O = 2,5-diamino-6-(1-D-ribosylamino)pyrimidin-4(3H)-one 5'-phosphate + formate + H(+). The protein operates within cofactor biosynthesis; coenzyme F420 biosynthesis. It functions in the pathway cofactor biosynthesis; riboflavin biosynthesis. Catalyzes the hydrolysis of the formamide of 2-amino-5-formylamino-6-ribosylamino-4(3H)-pyrimidinone 5'-monophosphate (FAPy) to form 2,5-diamino-6-ribosylamino-4(3H)-pyrimidinone 5'-phosphate (APy). This is 2-amino-5-formylamino-6-ribosylaminopyrimidin-4(3H)-one 5'-monophosphate deformylase from Methanothermus fervidus (strain ATCC 43054 / DSM 2088 / JCM 10308 / V24 S).